The following is a 445-amino-acid chain: GTPase Der (445 aa).

2 consecutive EngA-type G domains span residues 3–167 and 180–353; these read PVIA…YAGQ and IKIA…AAAM. GTP-binding positions include 9–16, 56–60, 119–122, 186–193, 233–237, and 298–301; these read GRPNVGKS, DTGGF, NKAE, DTAGL, and NKWD. The KH-like domain occupies 354 to 438; the sequence is AKLPTPKLTR…PLRIEFRSSN (85 aa).

It belongs to the TRAFAC class TrmE-Era-EngA-EngB-Septin-like GTPase superfamily. EngA (Der) GTPase family. As to quaternary structure, associates with the 50S ribosomal subunit.

Functionally, GTPase that plays an essential role in the late steps of ribosome biogenesis. This Burkholderia lata (strain ATCC 17760 / DSM 23089 / LMG 22485 / NCIMB 9086 / R18194 / 383) protein is GTPase Der.